The sequence spans 544 residues: Methionine--tRNA ligase (544 aa).

Residues 10–20 (PYANGSLHLGH) carry the 'HIGH' region motif. The Zn(2+) site is built by Cys141, Cys144, Cys153, and Cys156. A 'KMSKS' region motif is present at residues 329 to 333 (KLSTS). Thr332 is an ATP binding site.

It belongs to the class-I aminoacyl-tRNA synthetase family. MetG type 1 subfamily. Monomer. It depends on Zn(2+) as a cofactor.

Its subcellular location is the cytoplasm. The catalysed reaction is tRNA(Met) + L-methionine + ATP = L-methionyl-tRNA(Met) + AMP + diphosphate. In terms of biological role, is required not only for elongation of protein synthesis but also for the initiation of all mRNA translation through initiator tRNA(fMet) aminoacylation. The sequence is that of Methionine--tRNA ligase from Bacillus mycoides (strain KBAB4) (Bacillus weihenstephanensis).